The primary structure comprises 133 residues: ATP synthase epsilon chain, chloroplastic (133 aa).

The protein belongs to the ATPase epsilon chain family. As to quaternary structure, F-type ATPases have 2 components, CF(1) - the catalytic core - and CF(0) - the membrane proton channel. CF(1) has five subunits: alpha(3), beta(3), gamma(1), delta(1), epsilon(1). CF(0) has three main subunits: a, b and c.

Its subcellular location is the plastid. The protein localises to the chloroplast thylakoid membrane. Its function is as follows. Produces ATP from ADP in the presence of a proton gradient across the membrane. The chain is ATP synthase epsilon chain, chloroplastic from Zygnema circumcarinatum (Green alga).